The sequence spans 596 residues: Alkaline phosphatase 4 (596 aa).

Residues 1-20 (MHCLVILGFLLGSLVAFSWA) form the signal peptide. Asp-93 contributes to the Mg(2+) binding site. A Zn(2+)-binding site is contributed by Asp-93. Ser-144 (phosphoserine intermediate) is an active-site residue. Residues His-202 and Thr-204 each coordinate Mg(2+). Asn-262 and Asn-297 each carry an N-linked (GlcNAc...) asparagine glycan. Glu-369 contributes to the Mg(2+) binding site. Residues Asp-374 and His-378 each coordinate Zn(2+). A glycan (N-linked (GlcNAc...) asparagine) is linked at Asn-401. Asp-415 and His-416 together coordinate Zn(2+). 2 N-linked (GlcNAc...) asparagine glycosylation sites follow: Asn-464 and Asn-470. Residue His-504 coordinates Zn(2+). The cysteines at positions 539 and 550 are disulfide-linked. Over residues 548–566 (DSCEDHKDGQKDRPLDKPN) the composition is skewed to basic and acidic residues. Residues 548-570 (DSCEDHKDGQKDRPLDKPNPKRN) form a disordered region. Asn-570 carries the GPI-anchor amidated asparagine lipid modification. The helical transmembrane segment at 571-591 (GATVVGASLIPILTAATAAIL) threads the bilayer. Positions 571-596 (GATVVGASLIPILTAATAAILRGRGL) are cleaved as a propeptide — removed in mature form.

It belongs to the alkaline phosphatase family. Homodimer. The cofactor is Mg(2+). It depends on Zn(2+) as a cofactor. As to expression, ellipsoid body ring neurons in the adult brain and in the lower Malpighian tubule and ureter.

The protein resides in the cell membrane. The enzyme catalyses a phosphate monoester + H2O = an alcohol + phosphate. Important role in neural and renal epithelial function. The chain is Alkaline phosphatase 4 from Drosophila melanogaster (Fruit fly).